The sequence spans 470 residues: MSQNFGKISQVIGAVIDVEFEPGKLPPIYQALRVTNPAIDDQEFNLVLEVAQHLGENAVRTIAMDSTDGLVRGQQVKDMGKQISVPVGKKTLGRILNVIGEPVDEMGPIGNEKEYGIHREAPLFVNQSTKVEAFTTGIKVVDLLAPYARGGKIGLFGGAGVGKTVLIMELINNIAKQHGGFSVFAGVGERTREGNDLWMEMKESGVLDKAALVYGQMNEPPGARARVALSALSIAEYFRDEEGQDVLLFVDNIFRFTQAGSEVSALLGRIPSAVGYQPTLATEMGELQERITSTNKGSITSVQAIYVPADDLTDPAPATAFAHLDATTVLSRQIAELGIYPAVDPLDSTSRILDPQVIGDEHYAIARQVQYVLQKYKDLQDIIAILGMDELSEEDKLVVARARKIQKFLSQPFHVAEAFTGSPGKYVELKDTIKGFSEIIAGKHDDLPEQAFYMVGTIEEAIEKAQKLAV.

157–164 is a binding site for ATP; the sequence is GGAGVGKT.

Belongs to the ATPase alpha/beta chains family. F-type ATPases have 2 components, CF(1) - the catalytic core - and CF(0) - the membrane proton channel. CF(1) has five subunits: alpha(3), beta(3), gamma(1), delta(1), epsilon(1). CF(0) has three main subunits: a(1), b(2) and c(9-12). The alpha and beta chains form an alternating ring which encloses part of the gamma chain. CF(1) is attached to CF(0) by a central stalk formed by the gamma and epsilon chains, while a peripheral stalk is formed by the delta and b chains.

Its subcellular location is the cell inner membrane. It carries out the reaction ATP + H2O + 4 H(+)(in) = ADP + phosphate + 5 H(+)(out). In terms of biological role, produces ATP from ADP in the presence of a proton gradient across the membrane. The catalytic sites are hosted primarily by the beta subunits. In Citrifermentans bemidjiense (strain ATCC BAA-1014 / DSM 16622 / JCM 12645 / Bem) (Geobacter bemidjiensis), this protein is ATP synthase subunit beta.